Reading from the N-terminus, the 124-residue chain is Small ribosomal subunit protein uS12cz/uS12cy (124 aa).

Belongs to the universal ribosomal protein uS12 family. Part of the 30S ribosomal subunit.

It is found in the plastid. Its subcellular location is the chloroplast. Functionally, with S4 and S5 plays an important role in translational accuracy. Located at the interface of the 30S and 50S subunits. The chain is Small ribosomal subunit protein uS12cz/uS12cy (rps12-A) from Zea mays (Maize).